A 148-amino-acid polypeptide reads, in one-letter code: Pseudoazurin (148 aa).

An N-terminal signal peptide occupies residues 1-25 (MMIFRALIAAATLAIAIATTLPAAA). The 89-residue stretch at 30 to 118 (VKMLNSGPGG…MGMVALVVVG (89 aa)) folds into the Plastocyanin-like domain. 4 residues coordinate Cu cation: histidine 65, cysteine 103, histidine 106, and methionine 111.

Cu cation is required as a cofactor.

Its subcellular location is the periplasm. The chain is Pseudoazurin from Methylorubrum extorquens (strain ATCC 14718 / DSM 1338 / JCM 2805 / NCIMB 9133 / AM1) (Methylobacterium extorquens).